A 1015-amino-acid polypeptide reads, in one-letter code: SKI family transcriptional corepressor 2 (1015 aa).

Disordered stretches follow at residues 280–316 and 518–934; these read HLLG…DDDD and GAAG…KKDV. Positions 284 to 295 are enriched in pro residues; that stretch reads APPPPPPPPPPL. Residues 575-600 show a composition bias toward low complexity; the sequence is PPADSVAAAGAGAAAAGSGPAGSRVP. Over residues 628–637 the composition is skewed to basic and acidic residues; the sequence is GGKDDAESLA. The span at 653–669 shows a compositional bias: basic residues; sequence HPHHHHHPHHHHHHHHP. Pro residues-rich tracts occupy residues 670-684 and 694-708; these read PQPP…PQPD and APPP…PPLA. Acidic residues-rich tracts occupy residues 730–745 and 754–774; these read DSSE…QEVD and GEEE…EETE. Over residues 793 to 803 the composition is skewed to basic and acidic residues; sequence PSEKGSSRDRA. The span at 832–842 shows a compositional bias: pro residues; it reads DLPPPPPPPLA. 3 stretches are compositionally biased toward basic and acidic residues: residues 861–877, 885–899, and 912–922; these read PSLE…KTKE, TKDD…KEHS, and FWRERSGEHTQ.

Belongs to the SKI family. In terms of assembly, interacts with SMAD2 and SMAD3. Expressed in cerebellum, spinal cord and testis. Isoform 2 is present in cerebellum (at protein level).

It localises to the nucleus. The protein resides in the cytoplasm. Exhibits transcriptional repressor activity. Acts as a TGF-beta antagonist in the nervous system. This Homo sapiens (Human) protein is SKI family transcriptional corepressor 2.